The following is a 233-amino-acid chain: tRNA (guanine-N(7)-)-methyltransferase (233 aa).

Residues 1–21 are disordered; that stretch reads MTEESHPLRGAGNFFGRRHGK. The S-adenosyl-L-methionine site is built by Glu-64, Glu-89, Asp-116, and Asp-138. Asp-138 is a catalytic residue. Substrate-binding positions include Lys-142, Asp-174, and 212-215; that span reads TRYE.

It belongs to the class I-like SAM-binding methyltransferase superfamily. TrmB family.

It carries out the reaction guanosine(46) in tRNA + S-adenosyl-L-methionine = N(7)-methylguanosine(46) in tRNA + S-adenosyl-L-homocysteine. Its pathway is tRNA modification; N(7)-methylguanine-tRNA biosynthesis. In terms of biological role, catalyzes the formation of N(7)-methylguanine at position 46 (m7G46) in tRNA. The polypeptide is tRNA (guanine-N(7)-)-methyltransferase (Brucella anthropi (strain ATCC 49188 / DSM 6882 / CCUG 24695 / JCM 21032 / LMG 3331 / NBRC 15819 / NCTC 12168 / Alc 37) (Ochrobactrum anthropi)).